Consider the following 419-residue polypeptide: MSYIIDRRLNSKKKSMVNRQRFLRRYQQHIKKAVSDAVDRRSITDIESGESISIPTRDISEPIFHHGSGGKNNRVLPGNDRFNGGDHIERPEQGQGGGGNGSGASDSGEGEDDFVFQISQEEFLNFLFEDLALPNLVKRQLAGNEEFEFRRAGISNEGSPGKINIIRSLRSANSRRIALTGKKRRRLKEVEAELEILEPESAEAQALLAEAEELHAKIKRIPWLDDFDLKYNLHVKHPLPTSKAVMFCLMDVSGSMDQATKDIAKRFFLLLYLFLQRNYERTEVVFIRHHTSAKEVDEQEFFYSRETGGTIVSSALKMMDDILQTRYPASEWNIYGAQASDGDNWNDDSVICYRLLTEKLLPKVQYYSYIEITTRERQALWHAYEQVLSDFPNTFAMRQLQSAADIYPVFRQLFQKQTT.

A disordered region spans residues 63 to 111; that stretch reads IFHHGSGGKNNRVLPGNDRFNGGDHIERPEQGQGGGGNGSGASDSGEGE. The span at 83-92 shows a compositional bias: basic and acidic residues; it reads NGGDHIERPE.

This sequence belongs to the UPF0229 family.

The sequence is that of UPF0229 protein TERTU_3150 from Teredinibacter turnerae (strain ATCC 39867 / T7901).